We begin with the raw amino-acid sequence, 445 residues long: Phosphoglucosamine mutase (445 aa).

Residue Ser102 is the Phosphoserine intermediate of the active site. Positions 102, 241, 243, and 245 each coordinate Mg(2+). Position 102 is a phosphoserine (Ser102).

It belongs to the phosphohexose mutase family. Requires Mg(2+) as cofactor. Activated by phosphorylation.

The catalysed reaction is alpha-D-glucosamine 1-phosphate = D-glucosamine 6-phosphate. Catalyzes the conversion of glucosamine-6-phosphate to glucosamine-1-phosphate. The chain is Phosphoglucosamine mutase from Aliivibrio fischeri (strain MJ11) (Vibrio fischeri).